The primary structure comprises 538 residues: Chaperonin GroEL (538 aa).

Residues 29 to 32, 86 to 90, Gly-413, 479 to 481, and Asp-495 contribute to the ATP site; these read TLGP, DGTTT, and DAL.

This sequence belongs to the chaperonin (HSP60) family. Forms a cylinder of 14 subunits composed of two heptameric rings stacked back-to-back. Interacts with the co-chaperonin GroES.

The protein resides in the cytoplasm. It carries out the reaction ATP + H2O + a folded polypeptide = ADP + phosphate + an unfolded polypeptide.. Together with its co-chaperonin GroES, plays an essential role in assisting protein folding. The GroEL-GroES system forms a nano-cage that allows encapsulation of the non-native substrate proteins and provides a physical environment optimized to promote and accelerate protein folding. The sequence is that of Chaperonin GroEL from Thermotoga petrophila (strain ATCC BAA-488 / DSM 13995 / JCM 10881 / RKU-1).